Consider the following 427-residue polypeptide: tRNA(Ile)-lysidine synthase (427 aa).

25 to 30 (SGGLDS) provides a ligand contact to ATP.

Belongs to the tRNA(Ile)-lysidine synthase family.

It is found in the cytoplasm. The enzyme catalyses cytidine(34) in tRNA(Ile2) + L-lysine + ATP = lysidine(34) in tRNA(Ile2) + AMP + diphosphate + H(+). Ligates lysine onto the cytidine present at position 34 of the AUA codon-specific tRNA(Ile) that contains the anticodon CAU, in an ATP-dependent manner. Cytidine is converted to lysidine, thus changing the amino acid specificity of the tRNA from methionine to isoleucine. In Histophilus somni (strain 129Pt) (Haemophilus somnus), this protein is tRNA(Ile)-lysidine synthase.